The primary structure comprises 1321 residues: Restriction of telomere capping protein 1 (1321 aa).

Residues 1 to 91 (MFKRGSNRAT…NARWRPSESS (91 aa)) are disordered. The span at 7–18 (NRATSSSQGQQP) shows a compositional bias: polar residues. Over residues 23–33 (SLKYQSSSSRY) the composition is skewed to low complexity. The segment covering 81–91 (SNARWRPSESS) has biased composition (basic and acidic residues). WD repeat units lie at residues 109-148 (KEVS…ITNV), 174-215 (KKIS…AIDN), 223-263 (EHTR…ISTT), 271-323 (TGSD…QAEK), 327-366 (AHSG…NQVG), 403-450 (NTAR…IPKN), and 453-491 (ASSA…TVLD). Disordered regions lie at residues 546-574 (TANS…KNPT) and 589-611 (RSTM…NSSP). Positions 551 to 574 (TGGNNPNITSNTSSSAASFSKNPT) are enriched in low complexity. Positions 593 to 611 (SKHAQSVNSKFSPSVNSSP) are enriched in polar residues. One copy of the WD 8 repeat lies at 797 to 837 (KTKNLIELITLCDKNAEIYIMLEDFSNYKIWLLMRDSLLWD). Disordered stretches follow at residues 893-917 (DLSS…QTPP) and 957-1069 (SHGD…PSFS). Over residues 898–917 (VNTNNRHSFNEPTHLTQTPP) the composition is skewed to polar residues. Residues 965-976 (AIDEEEEGEERE) show a composition bias toward acidic residues. Composition is skewed to polar residues over residues 1010-1022 (SHVS…PSNP) and 1035-1051 (FIDS…SSNV). Over residues 1060-1069 (SKKSSMPSFS) the composition is skewed to low complexity. The WD 9 repeat unit spans residues 1108–1151 (SWNGSVAKTTTQMSGITALMNETKKLENTITPPWSSRRLIHQLY). The segment at 1274–1316 (CCFCNKPMKSLAISMLNCGHEGHFECLKKWFFDENMDVCPLGC) adopts an RING-type; degenerate zinc-finger fold.

This sequence belongs to the WD repeat RTC1 family.

The protein resides in the vacuole. May be involved in a process influencing telomere capping. The chain is Restriction of telomere capping protein 1 (RTC1) from Kluyveromyces lactis (strain ATCC 8585 / CBS 2359 / DSM 70799 / NBRC 1267 / NRRL Y-1140 / WM37) (Yeast).